A 208-amino-acid chain; its full sequence is Protein-L-isoaspartate O-methyltransferase (208 aa).

Residue serine 59 is part of the active site.

The protein belongs to the methyltransferase superfamily. L-isoaspartyl/D-aspartyl protein methyltransferase family.

Its subcellular location is the cytoplasm. It catalyses the reaction [protein]-L-isoaspartate + S-adenosyl-L-methionine = [protein]-L-isoaspartate alpha-methyl ester + S-adenosyl-L-homocysteine. Its function is as follows. Catalyzes the methyl esterification of L-isoaspartyl residues in peptides and proteins that result from spontaneous decomposition of normal L-aspartyl and L-asparaginyl residues. It plays a role in the repair and/or degradation of damaged proteins. The sequence is that of Protein-L-isoaspartate O-methyltransferase from Klebsiella pneumoniae (strain 342).